A 737-amino-acid polypeptide reads, in one-letter code: Procollagen-lysine,2-oxoglutarate 5-dioxygenase 2 (737 aa).

Positions 1–25 (MGDRGARPGRLMPMLALLSWAAGLG) are cleaved as a signal peptide. N-linked (GlcNAc...) asparagine glycans are attached at residues Asn-63 and Asn-209. Thr-320 is subject to Phosphothreonine. Tyr-323 is subject to Phosphotyrosine. 2 N-linked (GlcNAc...) asparagine glycosylation sites follow: Asn-365 and Asn-522. The 94-residue stretch at 644 to 737 (KGFALLNFVV…RYIAVSFIDP (94 aa)) folds into the Fe2OG dioxygenase domain. Residues His-666 and Asp-668 each contribute to the Fe cation site. An N-linked (GlcNAc...) asparagine glycan is attached at Asn-696. N6-succinyllysine is present on Lys-704. His-718 provides a ligand contact to Fe cation. Asn-725 carries an N-linked (GlcNAc...) asparagine glycan. Arg-728 is a catalytic residue.

In terms of assembly, homodimer. Fe(2+) serves as cofactor. Requires L-ascorbate as cofactor. As to expression, is highly expressed in the heart, lung, kidney, eye, ovary and placenta.

It localises to the rough endoplasmic reticulum membrane. It carries out the reaction L-lysyl-[collagen] + 2-oxoglutarate + O2 = (5R)-5-hydroxy-L-lysyl-[collagen] + succinate + CO2. In terms of biological role, forms hydroxylysine residues in -Xaa-Lys-Gly- sequences in collagens. These hydroxylysines serve as sites of attachment for carbohydrate units and are essential for the stability of the intermolecular collagen cross-links. The protein is Procollagen-lysine,2-oxoglutarate 5-dioxygenase 2 (Plod2) of Mus musculus (Mouse).